Here is a 953-residue protein sequence, read N- to C-terminus: E3 ubiquitin-protein ligase ZNF598 (953 aa).

Basic residues predominate over residues 25–39 (KPSKSTRIKPTKPHH). The disordered stretch occupies residues 25–47 (KPSKSTRIKPTKPHHTPSNSMES). The segment at 57 to 97 (CVLCCQDIDLFAVGKCDHPVCYRCSTKMRVLCEQKYCAVCR) adopts an RING-type zinc-finger fold. A C2H2-type zinc finger spans residues 215–238 (PLCKFCDDRYLDNDELLKHLRRDH). 2 disordered regions span residues 299 to 779 (SKNR…EDSS) and 884 to 911 (EKQQ…SSLD). A compositionally biased stretch (low complexity) spans 371–380 (AAAMRASMAS). Over residues 381–409 (HQEERSHAQERSMLKPRREEKLEPDETRN) the composition is skewed to basic and acidic residues. Composition is skewed to polar residues over residues 410–431 (NRST…NGSL) and 467–483 (LSGS…YTNQ). Residue S489 is modified to Phosphoserine. 2 stretches are compositionally biased toward low complexity: residues 508–518 (QSSAASAWSQA) and 536–553 (MTPM…PLPS). 2 stretches are compositionally biased toward polar residues: residues 555-564 (SVPQPLTASS) and 641-650 (LGSPSHTPET). The span at 655 to 666 (AHKENVPEKKPP) shows a compositional bias: basic and acidic residues. Over residues 695–711 (SCTSFPENITSSKQPVT) the composition is skewed to polar residues. Over residues 747–765 (LPPPPPPGLGPAVSKPPPG) the composition is skewed to pro residues. Residues 770–779 (PLNSNVEDSS) are compositionally biased toward polar residues.

Belongs to the ZNF598/HEL2 family.

It is found in the cytoplasm. It localises to the cytosol. It catalyses the reaction S-ubiquitinyl-[E2 ubiquitin-conjugating enzyme]-L-cysteine + [acceptor protein]-L-lysine = [E2 ubiquitin-conjugating enzyme]-L-cysteine + N(6)-ubiquitinyl-[acceptor protein]-L-lysine.. Its pathway is protein modification; protein ubiquitination. Functionally, E3 ubiquitin-protein ligase that plays a key role in the ribosome quality control (RQC), a pathway that takes place when a ribosome has stalled during translation, leading to degradation of nascent peptide chains. ZNF598 is activated when ribosomes are stalled within an mRNA following translation of prematurely polyadenylated mRNAs. Acts as a ribosome collision sensor: specifically recognizes and binds collided di-ribosome, which arises when a trailing ribosome encounters a slower leading ribosome, leading to terminally arrest translation. Following binding to colliding ribosomes, mediates monoubiquitination of 40S ribosomal proteins RPS10/eS10 and RPS3/uS3, and 'Lys-63'-linked polyubiquitination of RPS20/uS10. Polyubiquitination of RPS20/uS10 promotes recruitment of the RQT (ribosome quality control trigger) complex, which drives the disassembly of stalled ribosomes, followed by degradation of nascent peptides. In Danio rerio (Zebrafish), this protein is E3 ubiquitin-protein ligase ZNF598.